Consider the following 754-residue polypeptide: Probable TonB-dependent siderophore receptor PirA (754 aa).

The signal sequence occupies residues 1–24; that stretch reads MSKRIIQSVLSVSVLASMMSMAFA. Residues 54-181 form the TBDR plug domain; it reads EQVKQSLGVS…AGGVVNIITK (128 aa). Residues 186–754 enclose the TBDR beta-barrel domain; that stretch reads ETHGSVEFYT…AYYASLKYSF (569 aa). Over residues 404–414 the composition is skewed to polar residues; sequence VSTTQGKDSSG. The disordered stretch occupies residues 404–424; that stretch reads VSTTQGKDSSGSGYGDQLAKG. The cysteines at positions 511 and 519 are disulfide-linked. The short motif at 737–754 is the TonB C-terminal box element; that stretch reads QTYNEPGRAYYASLKYSF.

The protein belongs to the TonB-dependent receptor family.

The protein localises to the cell outer membrane. In terms of biological role, probably involved in the initial step of iron uptake by binding iron chelating siderophores, thereby allowing extraction of iron from the environment. May bind the siderophore, ferric enterobactin, with micromolar affinity. In Acinetobacter baumannii (strain ATCC 19606 / DSM 30007 / JCM 6841 / CCUG 19606 / CIP 70.34 / NBRC 109757 / NCIMB 12457 / NCTC 12156 / 81), this protein is Probable TonB-dependent siderophore receptor PirA.